A 253-amino-acid polypeptide reads, in one-letter code: Polyprenal reductase (253 aa).

The next 4 helical transmembrane spans lie at 18 to 38 (LSFF…PEFL), 78 to 98 (FLSL…IIFG), 123 to 143 (HYLV…ISLY), and 200 to 220 (IIYS…VWVI).

This sequence belongs to the steroid 5-alpha reductase family. Polyprenal reductase subfamily.

Its subcellular location is the endoplasmic reticulum membrane. The enzyme catalyses a di-trans,poly-cis-dolichal + NADP(+) = a di-trans,poly-cis-polyprenal + NADPH + H(+). Its pathway is protein modification; protein glycosylation. Plays a key role in early steps of protein N-linked glycosylation by being involved in the conversion of polyprenol into dolichol. Acts as a polyprenal reductase that mediates the reduction of polyprenal into dolichal in a NADP-dependent mechanism. Dolichols are required for the synthesis of dolichol-linked monosaccharides and the oligosaccharide precursor used for N-glycosylation. This chain is Polyprenal reductase, found in Saccharomyces cerevisiae (strain ATCC 204508 / S288c) (Baker's yeast).